Consider the following 229-residue polypeptide: Potassium/proton antiporter CemA (229 aa).

Helical transmembrane passes span 7–27 (FTPL…SFSF), 114–134 (LICF…LVIL), and 189–209 (ILSG…KYWI).

The protein belongs to the CemA family.

The protein localises to the plastid. It localises to the chloroplast inner membrane. It catalyses the reaction K(+)(in) + H(+)(out) = K(+)(out) + H(+)(in). Its function is as follows. Contributes to K(+)/H(+) antiport activity by supporting proton efflux to control proton extrusion and homeostasis in chloroplasts in a light-dependent manner to modulate photosynthesis. Prevents excessive induction of non-photochemical quenching (NPQ) under continuous-light conditions. Indirectly promotes efficient inorganic carbon uptake into chloroplasts. The sequence is that of Potassium/proton antiporter CemA from Ipomoea purpurea (Common morning glory).